The sequence spans 267 residues: Thymidylate synthase (267 aa).

Arg24 is a binding site for dUMP. His54 provides a ligand contact to (6R)-5,10-methylene-5,6,7,8-tetrahydrofolate. Residue 129–130 (RR) participates in dUMP binding. Cys149 functions as the Nucleophile in the catalytic mechanism. Residues 169-172 (RSAD), Asn180, and 210-212 (HVY) contribute to the dUMP site. Asp172 contacts (6R)-5,10-methylene-5,6,7,8-tetrahydrofolate. Ala266 is a binding site for (6R)-5,10-methylene-5,6,7,8-tetrahydrofolate.

The protein belongs to the thymidylate synthase family. Bacterial-type ThyA subfamily. In terms of assembly, homodimer.

The protein resides in the cytoplasm. It catalyses the reaction dUMP + (6R)-5,10-methylene-5,6,7,8-tetrahydrofolate = 7,8-dihydrofolate + dTMP. It participates in pyrimidine metabolism; dTTP biosynthesis. Its function is as follows. Catalyzes the reductive methylation of 2'-deoxyuridine-5'-monophosphate (dUMP) to 2'-deoxythymidine-5'-monophosphate (dTMP) while utilizing 5,10-methylenetetrahydrofolate (mTHF) as the methyl donor and reductant in the reaction, yielding dihydrofolate (DHF) as a by-product. This enzymatic reaction provides an intracellular de novo source of dTMP, an essential precursor for DNA biosynthesis. The polypeptide is Thymidylate synthase (Paenarthrobacter aurescens (strain TC1)).